The following is a 515-amino-acid chain: MSVSQLKIQTLTLNDSEPSLPGKPITPSKEQIRDDVVLLWKEEPAAEDLDLPHLYDKMKIRNTDWQFDINTLEDVLVSNNLYSVDDSQMDSYNDKIEFPDISEVMHLVNDKLPSKVEIRECEELRKGRGLYATRDIQQGELLFHEKVPIAMVPPMDKLKLIRSGKSCSMCGVSLSNSSHFTMLHGLDCNGCNSIWCSTNCKQKDITHPYLKHFGSKNKNIRPMDWNMFERHCQENIFVAAYSIGVIHAASLIDKAQSDEINQQFEALAKISQRVRYESSDSNNIGGTFDAEIGSLKEENPEPLWKKAFDLFIRTFPDTAEMGYEVFLEYLGRFHINQLSGQLYFLYSFLNHNCEPNVRYDINNKLELKVYARKFIKKDEELVTTYVNPLHGVSLRRRELRVNWGFICNCDRCAKEIELRKKNAVSIRETVLNSNSSSEVSLRSGLNVTSPIALQRSNGGSSSDLRRKSSIRNRKPDLKEMLKNSKEFELEAPAALGRNRSTSVRFDDIVSMAVEE.

One can recognise an SET domain in the interval serine 114–valine 386. Residues alanine 452 to serine 462 are compositionally biased toward polar residues. The segment at alanine 452–aspartate 476 is disordered.

It belongs to the class V-like SAM-binding methyltransferase superfamily. Histone-lysine methyltransferase family. SET5 subfamily.

Its subcellular location is the nucleus. It localises to the chromosome. The protein localises to the cytoplasm. It carries out the reaction L-lysyl-[histone] + S-adenosyl-L-methionine = N(6)-methyl-L-lysyl-[histone] + S-adenosyl-L-homocysteine + H(+). Its function is as follows. Histone methyltransferase that monomethylates 'Lys-5', 'Lys-8' and 'Lys-12' of histone H4 (H4K5me1, H4K8me1 and H4K12me1, respectively), thereby controlling gene expression and remodeling chromatin structures. This chain is Histone-lysine N-methyltransferase SET5 (SET5), found in Candida glabrata (strain ATCC 2001 / BCRC 20586 / JCM 3761 / NBRC 0622 / NRRL Y-65 / CBS 138) (Yeast).